Reading from the N-terminus, the 379-residue chain is 1-deoxy-D-xylulose 5-phosphate reductoisomerase (379 aa).

7 residues coordinate NADPH: threonine 10, glycine 11, serine 12, isoleucine 13, arginine 38, asparagine 39, and asparagine 121. Position 122 (lysine 122) interacts with 1-deoxy-D-xylulose 5-phosphate. Glutamate 123 is an NADPH binding site. Position 147 (aspartate 147) interacts with Mn(2+). 1-deoxy-D-xylulose 5-phosphate contacts are provided by serine 148, glutamate 149, serine 173, and histidine 196. Glutamate 149 is a binding site for Mn(2+). Glycine 202 contributes to the NADPH binding site. 1-deoxy-D-xylulose 5-phosphate contacts are provided by serine 209, asparagine 214, lysine 215, and glutamate 218. Residue glutamate 218 participates in Mn(2+) binding.

It belongs to the DXR family. It depends on Mg(2+) as a cofactor. Requires Mn(2+) as cofactor.

It carries out the reaction 2-C-methyl-D-erythritol 4-phosphate + NADP(+) = 1-deoxy-D-xylulose 5-phosphate + NADPH + H(+). Its pathway is isoprenoid biosynthesis; isopentenyl diphosphate biosynthesis via DXP pathway; isopentenyl diphosphate from 1-deoxy-D-xylulose 5-phosphate: step 1/6. Its function is as follows. Catalyzes the NADPH-dependent rearrangement and reduction of 1-deoxy-D-xylulose-5-phosphate (DXP) to 2-C-methyl-D-erythritol 4-phosphate (MEP). This chain is 1-deoxy-D-xylulose 5-phosphate reductoisomerase, found in Chlamydia trachomatis serovar A (strain ATCC VR-571B / DSM 19440 / HAR-13).